We begin with the raw amino-acid sequence, 481 residues long: UDP-N-acetylmuramoylalanine--D-glutamate ligase (481 aa).

108–114 (GTNGKTS) is an ATP binding site.

Belongs to the MurCDEF family.

It is found in the cytoplasm. The enzyme catalyses UDP-N-acetyl-alpha-D-muramoyl-L-alanine + D-glutamate + ATP = UDP-N-acetyl-alpha-D-muramoyl-L-alanyl-D-glutamate + ADP + phosphate + H(+). It participates in cell wall biogenesis; peptidoglycan biosynthesis. Cell wall formation. Catalyzes the addition of glutamate to the nucleotide precursor UDP-N-acetylmuramoyl-L-alanine (UMA). The polypeptide is UDP-N-acetylmuramoylalanine--D-glutamate ligase (Bifidobacterium longum subsp. infantis (strain ATCC 15697 / DSM 20088 / JCM 1222 / NCTC 11817 / S12)).